Here is a 342-residue protein sequence, read N- to C-terminus: N-acetyl-gamma-glutamyl-phosphate reductase (342 aa).

The active site involves C149.

Belongs to the NAGSA dehydrogenase family. Type 1 subfamily.

Its subcellular location is the cytoplasm. The catalysed reaction is N-acetyl-L-glutamate 5-semialdehyde + phosphate + NADP(+) = N-acetyl-L-glutamyl 5-phosphate + NADPH + H(+). It participates in amino-acid biosynthesis; L-arginine biosynthesis; N(2)-acetyl-L-ornithine from L-glutamate: step 3/4. Its function is as follows. Catalyzes the NADPH-dependent reduction of N-acetyl-5-glutamyl phosphate to yield N-acetyl-L-glutamate 5-semialdehyde. The sequence is that of N-acetyl-gamma-glutamyl-phosphate reductase from Roseobacter denitrificans (strain ATCC 33942 / OCh 114) (Erythrobacter sp. (strain OCh 114)).